A 294-amino-acid polypeptide reads, in one-letter code: 4-hydroxy-tetrahydrodipicolinate synthase (294 aa).

Thr-47 provides a ligand contact to pyruvate. Tyr-135 (proton donor/acceptor) is an active-site residue. The active-site Schiff-base intermediate with substrate is the Lys-163. Thr-205 serves as a coordination point for pyruvate.

Belongs to the DapA family. As to quaternary structure, homotetramer; dimer of dimers.

The protein resides in the cytoplasm. It carries out the reaction L-aspartate 4-semialdehyde + pyruvate = (2S,4S)-4-hydroxy-2,3,4,5-tetrahydrodipicolinate + H2O + H(+). The protein operates within amino-acid biosynthesis; L-lysine biosynthesis via DAP pathway; (S)-tetrahydrodipicolinate from L-aspartate: step 3/4. Its function is as follows. Catalyzes the condensation of (S)-aspartate-beta-semialdehyde [(S)-ASA] and pyruvate to 4-hydroxy-tetrahydrodipicolinate (HTPA). The chain is 4-hydroxy-tetrahydrodipicolinate synthase from Rickettsia peacockii (strain Rustic).